A 125-amino-acid polypeptide reads, in one-letter code: Small ribosomal subunit protein uS12 (125 aa).

The interval 1-28 (MPTISQLIGSERKRLTRKTKSPALKSCP) is disordered. Position 89 is a 3-methylthioaspartic acid (Asp89). Residues 104–125 (TAGVKDRRQSRSKYGAKAPKNN) are disordered.

It belongs to the universal ribosomal protein uS12 family. Part of the 30S ribosomal subunit. Contacts proteins S8 and S17. May interact with IF1 in the 30S initiation complex.

In terms of biological role, with S4 and S5 plays an important role in translational accuracy. Functionally, interacts with and stabilizes bases of the 16S rRNA that are involved in tRNA selection in the A site and with the mRNA backbone. Located at the interface of the 30S and 50S subunits, it traverses the body of the 30S subunit contacting proteins on the other side and probably holding the rRNA structure together. The combined cluster of proteins S8, S12 and S17 appears to hold together the shoulder and platform of the 30S subunit. The sequence is that of Small ribosomal subunit protein uS12 from Prochlorococcus marinus (strain MIT 9515).